The chain runs to 508 residues: Monocarboxylate transporter 9 (508 aa).

The next 6 membrane-spanning stretches (helical) occupy residues 13–33 (WVIVVVSFFTQFLCYGSPLAV), 53–73 (WVGSLASGVGLLASPVCSLFV), 80–100 (PVTIFSGFLVAGGLMLSSLAP), 102–122 (IYFLFFSYGIVVGLGCGLLYT), 137–157 (GLALGLISTGSSVGLFIYAAL), and 164–184 (FYGLDGCLLIVGALALNILAC). Positions 242–263 (GDWGRETSLPKNPTGAAHTKEP) are disordered. Transmembrane regions (helical) follow at residues 303 to 323 (VFSALFVAILLFDIGGFPPSL), 341 to 361 (IPLISIFGIMTAVGKLLLGIL), 370 to 390 (LYLYVATLIITGLALCAIPLA), 396 to 416 (LAILSGILGFLTGNWSIFPYV), 431 to 451 (GILMFFAGLGNSLGPPIVGWF), and 460 to 480 (IAFYFSGFCVLLGGFILLLAI).

Belongs to the major facilitator superfamily. Monocarboxylate porter (TC 2.A.1.13) family. In terms of tissue distribution, expressed in the liver and kidneys. In the liver localizes on the sinusoidal membrane of the hepatocytes.

The protein localises to the cell membrane. It catalyses the reaction creatine(in) = creatine(out). It carries out the reaction (R)-carnitine(in) = (R)-carnitine(out). In terms of biological role, extracellular pH-and Na(+)-sensitive low-affinity creatine transporter. Also functions as a pH-independent carnitine efflux transporter. The protein is Monocarboxylate transporter 9 (Slc16a9) of Rattus norvegicus (Rat).